A 231-amino-acid chain; its full sequence is NADH-ubiquinone oxidoreductase chain 4 (231 aa).

Transmembrane regions (helical) follow at residues 1–21 (PIAG…YGII), 34–54 (MFIP…LTCL), 63–85 (IAYS…TPWG), 89–111 (AMAL…NTTY), 128–148 (ILPM…AMPP), and 169–189 (TIIM…HMFL).

This sequence belongs to the complex I subunit 4 family.

It localises to the mitochondrion membrane. It catalyses the reaction a ubiquinone + NADH + 5 H(+)(in) = a ubiquinol + NAD(+) + 4 H(+)(out). In terms of biological role, core subunit of the mitochondrial membrane respiratory chain NADH dehydrogenase (Complex I) that is believed to belong to the minimal assembly required for catalysis. Complex I functions in the transfer of electrons from NADH to the respiratory chain. The immediate electron acceptor for the enzyme is believed to be ubiquinone. The chain is NADH-ubiquinone oxidoreductase chain 4 (MT-ND4) from Lachesis muta muta (Bushmaster).